The chain runs to 149 residues: YbbR-like domain-containing protein in def 5'region (149 aa).

A YbbR-like domain is found at 1–68 (IPVEVLAQGA…LRPNRVRVVE (68 aa)).

The polypeptide is YbbR-like domain-containing protein in def 5'region (Thermus thermophilus).